A 130-amino-acid chain; its full sequence is Small ribosomal subunit protein uS9 (130 aa).

This sequence belongs to the universal ribosomal protein uS9 family.

This chain is Small ribosomal subunit protein uS9, found in Exiguobacterium sp. (strain ATCC BAA-1283 / AT1b).